A 371-amino-acid polypeptide reads, in one-letter code: Chaperone protein DnaJ (371 aa).

Residues 5–69 (DYYEVLGLSK…QKRAQYDQFG (65 aa)) form the J domain. The CR-type zinc-finger motif lies at 133 to 215 (GKELNVEIPV…CHGSGKVRKR (83 aa)). Zn(2+)-binding residues include Cys-146, Cys-149, Cys-163, Cys-166, Cys-189, Cys-192, Cys-203, and Cys-206. CXXCXGXG motif repeat units lie at residues 146 to 153 (CDTCKGSG), 163 to 170 (CKHCSGSG), 189 to 196 (CSHCSGTG), and 203 to 210 (CTTCHGSG).

Belongs to the DnaJ family. In terms of assembly, homodimer. It depends on Zn(2+) as a cofactor.

The protein localises to the cytoplasm. Functionally, participates actively in the response to hyperosmotic and heat shock by preventing the aggregation of stress-denatured proteins and by disaggregating proteins, also in an autonomous, DnaK-independent fashion. Unfolded proteins bind initially to DnaJ; upon interaction with the DnaJ-bound protein, DnaK hydrolyzes its bound ATP, resulting in the formation of a stable complex. GrpE releases ADP from DnaK; ATP binding to DnaK triggers the release of the substrate protein, thus completing the reaction cycle. Several rounds of ATP-dependent interactions between DnaJ, DnaK and GrpE are required for fully efficient folding. Also involved, together with DnaK and GrpE, in the DNA replication of plasmids through activation of initiation proteins. This chain is Chaperone protein DnaJ, found in Bacillus anthracis (strain A0248).